Here is a 635-residue protein sequence, read N- to C-terminus: MMVKIKNIIILFCIFGLLSNVSSLSSSSSSSQSSDNNGNLSPIQDYDLEFLSKHLTTKTPYWILTKNGDSNSQGDGSSGNSNSNSNSNSNSNSNSDSSNEPPEQCKLISIDFIARHGSRMPVLNSIEKLKEMTTSILEYKEQVNQGFNWIFNYSVPYPSDIAGNLILQGQYEHYNISKRLLKKYPLFFEPMKYKPQSYSITSTAISRTGISASAFSYGLLQGTGSLGVDGFQPVFIETASLDQDILLRFFATCNQYVDQLKNGTLINKDEQTKWNQMVFPNISNEISERLGLSDIWLPTSNVISDIFEACAYEISINNISDHWCSLLSKQNILDWEYSQDLSNYWLKSYGHEINYQIATPLLNDILSGFDIYINNNNNGSSSSSSSSSSNNGDNSGSNGSSGSGSSTSTSSNDNGSTNNNDNKVEPTSILRFGHAETIIPFISLLGLYKDEQKLFANSSTEQIENRKFRTSVVSPYASNIAMFLFDCGSAADGFKILVQHNELPVLVPGCDEIYCDYQQFKSIFKQGIDNFKWNSYCNINDDDSGSSGGDSGNGNGNDSHSKKSSYFLAIFIPITFLVGGTIGGIFTYFSYEKIMQVKNRKKLTQYGNDEFISSPKSKSFSFKPTKFDSRSPLIQ.

Residues 1 to 23 (MMVKIKNIIILFCIFGLLSNVSS) form the signal peptide. The Extracellular segment spans residues 24–565 (LSSSSSSSQS…GNDSHSKKSS (542 aa)). The tract at residues 66 to 102 (KNGDSNSQGDGSSGNSNSNSNSNSNSNSNSDSSNEPP) is disordered. Residues 67 to 99 (NGDSNSQGDGSSGNSNSNSNSNSNSNSNSDSSN) show a composition bias toward low complexity. His-116 is an active-site residue. The span at 380–421 (SSSSSSSSSSNNGDNSGSNGSSGSGSSTSTSSNDNGSTNNND) shows a compositional bias: low complexity. Residues 380–425 (SSSSSSSSSSNNGDNSGSNGSSGSGSSTSTSSNDNGSTNNNDNKVE) are disordered. Residues 566 to 586 (YFLAIFIPITFLVGGTIGGIF) form a helical membrane-spanning segment. Topologically, residues 587 to 635 (TYFSYEKIMQVKNRKKLTQYGNDEFISSPKSKSFSFKPTKFDSRSPLIQ) are cytoplasmic. Positions 614–624 (SPKSKSFSFKP) are enriched in low complexity. The disordered stretch occupies residues 614–635 (SPKSKSFSFKPTKFDSRSPLIQ).

The protein belongs to the histidine acid phosphatase family. MINPP1 subfamily.

The protein resides in the membrane. It catalyses the reaction 1D-myo-inositol hexakisphosphate + H2O = 1D-myo-inositol 1,2,4,5,6-pentakisphosphate + phosphate. The enzyme catalyses 1D-myo-inositol 1,2,4,5,6-pentakisphosphate + H2O = 1D-myo-inositol 1,2,5,6-tetrakisphosphate + phosphate. The catalysed reaction is 1D-myo-inositol 1,2,5,6-tetrakisphosphate + H2O = 1D-myo-inositol 1,2,6-trisphosphate + phosphate. It carries out the reaction 1D-myo-inositol 1,2,6-trisphosphate + H2O = 1D-myo-inositol 1,2-bisphosphate + phosphate. It catalyses the reaction 1D-myo-inositol 1,2-bisphosphate + H2O = 1D-myo-inositol 2-phosphate + phosphate. The enzyme catalyses (2R)-2,3-bisphosphoglycerate + H2O = (2R)-2-phosphoglycerate + phosphate. Probable multiple inositol polyphosphate phosphatase that hydrolyzes 1D-myo-inositol 1,3,4,5,6-pentakisphosphate (InsP5[2OH]) and 1D-myo-inositol hexakisphosphate (InsP6) to a range of less phosphorylated inositol phosphates. This regulates the availability of these various small molecule second messengers and metal chelators which control many aspects of cell physiology. May have a dual substrate specificity, and function as a 2,3-bisphosphoglycerate 3-phosphatase hydrolyzing 2,3-bisphosphoglycerate to 2-phosphoglycerate. 2,3-bisphosphoglycerate (BPG) is formed as part of the Rapoport-Luebering glycolytic bypass. This is Multiple inositol polyphosphate phosphatase 1 (mipp1) from Dictyostelium discoideum (Social amoeba).